A 215-amino-acid chain; its full sequence is Octanoyltransferase (215 aa).

The BPL/LPL catalytic domain maps to 31–206 (PDSQDEIWLV…QLVKHLDYAE (176 aa)). Substrate contacts are provided by residues 70 to 77 (RGGQVTYH), 137 to 139 (SLG), and 150 to 152 (GLA). Cys168 functions as the Acyl-thioester intermediate in the catalytic mechanism.

Belongs to the LipB family.

It is found in the cytoplasm. The catalysed reaction is octanoyl-[ACP] + L-lysyl-[protein] = N(6)-octanoyl-L-lysyl-[protein] + holo-[ACP] + H(+). Its pathway is protein modification; protein lipoylation via endogenous pathway; protein N(6)-(lipoyl)lysine from octanoyl-[acyl-carrier-protein]: step 1/2. Its function is as follows. Catalyzes the transfer of endogenously produced octanoic acid from octanoyl-acyl-carrier-protein onto the lipoyl domains of lipoate-dependent enzymes. Lipoyl-ACP can also act as a substrate although octanoyl-ACP is likely to be the physiological substrate. This Pseudomonas putida (strain GB-1) protein is Octanoyltransferase.